A 495-amino-acid chain; its full sequence is Internal alternative NAD(P)H-ubiquinone oxidoreductase A1, mitochondrial (495 aa).

The transit peptide at 1–41 directs the protein to the mitochondrion; the sequence is MPWFKNLIKISKTITNQSSSYKSITPLASPLLTQFLQFTKQ. 61–91 is an FAD binding site; the sequence is RIVVLGSGWAGCRLMKDIDTNIYDVVCVSPR. Residue 228–264 coordinates NAD(+); sequence LHCVVVGGGPTGVEFSGELSDFILKDVHQRYAHVKDY. The Microbody targeting signal motif lies at 486-495; it reads LVFGRDISRI.

The protein belongs to the NADH dehydrogenase family. It depends on FAD as a cofactor.

It is found in the mitochondrion inner membrane. The protein resides in the peroxisome. The enzyme catalyses a quinone + NADH + H(+) = a quinol + NAD(+). The catalysed reaction is a ubiquinone + NADH + H(+) = a ubiquinol + NAD(+). In terms of biological role, alternative NADH-ubiquinone oxidoreductase which catalyzes the oxidation of mitochondrial NADH does not translocate protons across the inner mitochondrial membrane. The polypeptide is Internal alternative NAD(P)H-ubiquinone oxidoreductase A1, mitochondrial (NDA1) (Solanum tuberosum (Potato)).